Reading from the N-terminus, the 419-residue chain is Sulfate adenylyltransferase (419 aa).

This sequence belongs to the sulfate adenylyltransferase family.

The enzyme catalyses sulfate + ATP + H(+) = adenosine 5'-phosphosulfate + diphosphate. It functions in the pathway sulfur metabolism; hydrogen sulfide biosynthesis; sulfite from sulfate: step 1/3. This chain is Sulfate adenylyltransferase, found in Psychrobacter sp. (strain PRwf-1).